The sequence spans 69 residues: MAVKKGSLVRIVPEKFENSVEAKASDRRLPPYVFEGTGEVLEIKGDYAQIQFRVPVPTVWLRVDQLEAA.

Belongs to the complex I NdhO subunit family. As to quaternary structure, NDH-1 can be composed of about 15 different subunits; different subcomplexes with different compositions have been identified which probably have different functions.

It localises to the cellular thylakoid membrane. The enzyme catalyses a plastoquinone + NADH + (n+1) H(+)(in) = a plastoquinol + NAD(+) + n H(+)(out). It carries out the reaction a plastoquinone + NADPH + (n+1) H(+)(in) = a plastoquinol + NADP(+) + n H(+)(out). Functionally, NDH-1 shuttles electrons from an unknown electron donor, via FMN and iron-sulfur (Fe-S) centers, to quinones in the respiratory and/or the photosynthetic chain. The immediate electron acceptor for the enzyme in this species is believed to be plastoquinone. Couples the redox reaction to proton translocation, and thus conserves the redox energy in a proton gradient. Cyanobacterial NDH-1 also plays a role in inorganic carbon-concentration. This chain is NAD(P)H-quinone oxidoreductase subunit O, found in Acaryochloris marina (strain MBIC 11017).